The primary structure comprises 294 residues: Elongation factor Ts (294 aa).

The interval 82–85 (TDFV) is involved in Mg(2+) ion dislocation from EF-Tu.

Belongs to the EF-Ts family.

The protein localises to the cytoplasm. Associates with the EF-Tu.GDP complex and induces the exchange of GDP to GTP. It remains bound to the aminoacyl-tRNA.EF-Tu.GTP complex up to the GTP hydrolysis stage on the ribosome. The chain is Elongation factor Ts from Psychrobacter arcticus (strain DSM 17307 / VKM B-2377 / 273-4).